The following is a 230-amino-acid chain: Probable phosphatase IndB (230 aa).

The active-site Nucleophile is the Asp-8. Positions 8, 10, and 169 each coordinate Mg(2+). Asp-10 acts as the Proton donor in catalysis.

The protein belongs to the HAD-like hydrolase superfamily. Mg(2+) serves as cofactor.

In terms of biological role, part of an operon that could be involved in the biosynthesis of the blue pigment indigoidine, which is implicated in pathogenicity and protection from oxidative stress. The chain is Probable phosphatase IndB from Dickeya dadantii (strain 3937) (Erwinia chrysanthemi (strain 3937)).